The sequence spans 576 residues: MNIQALLSDKVSQALIAAGAPADCEAQVRQSAKAQFGDYQANGVMAVAKKLGMQPRQLAERVVELLDLTGIASKIEIAGPGFINIFLDRQWVAEKVEYALTAPKLGVAPVEPQTIVVDYSAPNVAKQMHVGHLRSTIIGDAAVRTLAFLGHNVIRANHVGDWGTQFGMLIAYLEKMQNENASDMGLSDLELFYQQAKKTYDEDEEFALRARAYVVKLQSGDEYCRQMWRKLVDITMAQNQVAYDRLNVTLTKDDVMGESLYNAMLPEIVADLKAKGLAVESEGATVVYLDEYKNKDGEPMGVIIQKKDGGYLYTTTDIACAKYRYETLGADRILYYIDSRQHQHLMQAWTIVRKAGYVPESVPLEHHMFGMMLGKDGKPFKTRSGGTVKLSDLLDEAVERAGKLIAEKNPDMPADELKQVINAVGIGAVKYADLSKSRTTDYIFDWDNMLALDGNTAPYMQYAYTRVVSVFRRAGVDETSLTLPLVITEDREAALATRLLQFEEIITTVAREGTPHVMCSYLYDVAGLFSSFYEHCQILNAESEEIRQSRLKLAMLTAKTLKQGLDTLGIQTVERM.

The short motif at 122-132 (PNVAKQMHVGH) is the 'HIGH' region element.

This sequence belongs to the class-I aminoacyl-tRNA synthetase family. In terms of assembly, monomer.

It is found in the cytoplasm. It carries out the reaction tRNA(Arg) + L-arginine + ATP = L-arginyl-tRNA(Arg) + AMP + diphosphate. The protein is Arginine--tRNA ligase of Yersinia pseudotuberculosis serotype IB (strain PB1/+).